A 633-amino-acid polypeptide reads, in one-letter code: Phospholipid--sterol O-acyltransferase (633 aa).

Over 1 to 6 the chain is Cytoplasmic; it reads MGANSK. The helical; Signal-anchor for type II membrane protein transmembrane segment at 7-29 threads the bilayer; sequence SVTASFTVIAVFFLICGGRTAVE. The Lumenal portion of the chain corresponds to 30–633; that stretch reads DETEFHGDYS…TSANMLLQYI (604 aa). Ser-195 functions as the Acyl-ester intermediate in the catalytic mechanism. Active-site charge relay system residues include Asp-461 and His-505.

This sequence belongs to the AB hydrolase superfamily. Lipase family.

The protein resides in the microsome membrane. Involved in lipid catabolism. Essential for sterol esters biosynthesis in leaves and seeds, but not in flowers. Plays a role in controlling the free sterol content of leaves. Catalyzes the transacylation of acyl groups from phospholipids to a variety of different sterols. Prefers phosphatidylethanolamine over phosphatidylcholine as an acyl donor. Not active toward neutral lipids. Highly specific for position sn-2, which in plant lipids is essentially devoid of saturated acyl groups. Broad sterol specificity (cholesterol &gt; campesterol &gt; sitosterol &gt; stigmasterol), but no activity with lupeol or beta-amyrin. This Arabidopsis thaliana (Mouse-ear cress) protein is Phospholipid--sterol O-acyltransferase (PSAT).